A 120-amino-acid chain; its full sequence is Flagellar protein FliT (120 aa).

Residues 1–50 (MERHQHLLSEYQQILTLSEQMLMLATVENWNTLVDLEMTYLKAVENTANI) are required for homodimerization. Residues 60 to 98 (LQELLRQKLRSILENEIEIKRLLQRRLDKLSELVGQSTR) form a fliD binding region.

It belongs to the FliT family. In terms of assembly, homodimer. Interacts with FliD and FlhC.

The protein resides in the cytoplasm. It localises to the cytosol. Its function is as follows. Dual-function protein that regulates the transcription of class 2 flagellar operons and that also acts as an export chaperone for the filament-capping protein FliD. As a transcriptional regulator, acts as an anti-FlhDC factor; it directly binds FlhC, thus inhibiting the binding of the FlhC/FlhD complex to class 2 promoters, resulting in decreased expression of class 2 flagellar operons. As a chaperone, effects FliD transition to the membrane by preventing its premature polymerization, and by directing it to the export apparatus. The protein is Flagellar protein FliT of Yersinia pestis (strain Pestoides F).